Reading from the N-terminus, the 775-residue chain is MVRATCSCVMSVNPLSAQTSASPLSRNRSSLLSKFRTQLGQRNRAITDFYIEPDDPWRSYFPGDVIKGTVSLTVVRPVRITHLVISLHGIVKVFKNNVPAGETPPDVGSLGPGRGRRGAEYLGNGVATLFEDEVVLCGEGRLKEGIYKFRFEMSFPPYPLPSSISFERGTISYMLTSTLTKPTTMNPTLSCRRRINLLENIDIAAFPAPKPRVVTLEPISKRSKPKGKTKAAGFDAPDTASLEPSASGGITVPEHRPPLSPAPSNVSSSSRLSNSSQSFQIVTDPGSTASSGVRNSEARSNTPSVTDGIITAKAEVLRAGVLPGDTLPIKITINHTKQVRSAHGIIITLYRSGRIDLHPAIPMGSTANGKKPIYEDYYPRSRTGLGGLTLGTSRASSVFRKDLSQTFAPLIVDPTTLTADIKTSIRIPEDAFPTITRTPGSMINFRYYVEVVVDLRGKLTSPERFLPRFNLVSSGRNFSSNGKIVHPADTNGSAITANWGDNILDTDQIRREKGVVAVIFEVVIGTQDTQRRKSEARRMSSTAEEAEFQQPVENSVDGDYAGHDYQGSMAGPEPGYAPLENTAYGPDQIRWPDYPEQSEHEHYPFQPGTLPSPQPDEPMDEKARLRRAEQTLLPSQPPCDPEAGPSSAVEAAMPTAPVLPEDDHLNDYHHLPSTTVNGMTGMAPALMSAESVQTVIAGSSSAPLTSPSRPSEEDKQELERQRLMMEASAPGDPDARHNDRADDGPSAPIFHDDDDDQQLVGGAANGDELLPRYQR.

Disordered regions lie at residues 217–304 (EPIS…NTPS), 531–550 (RRKS…EFQQ), 586–623 (PDQI…DEKA), 631–650 (TLLP…SAVE), and 697–775 (AGSS…RYQR). The span at 262–278 (APSNVSSSSRLSNSSQS) shows a compositional bias: low complexity. The span at 279–304 (FQIVTDPGSTASSGVRNSEARSNTPS) shows a compositional bias: polar residues. The segment covering 697–709 (AGSSSAPLTSPSR) has biased composition (polar residues). Basic and acidic residues-rich tracts occupy residues 710-723 (PSEE…RQRL) and 733-743 (PDARHNDRADD).

It belongs to the arrestin family. PalF/RIM8 subfamily.

Its function is as follows. Required for the proteolytic cleavage of the transcription factor pacC in response to alkaline ambient pH. This Emericella nidulans (strain FGSC A4 / ATCC 38163 / CBS 112.46 / NRRL 194 / M139) (Aspergillus nidulans) protein is pH-response regulator protein palF/RIM8 (palF).